The following is a 382-amino-acid chain: Succinate--CoA ligase [ADP-forming] subunit beta (382 aa).

The ATP-grasp domain occupies 9-240; that stretch reads KELLKKYGLP…ITQIDPLEVE (232 aa). The ATP site is built by Lys-46, Glu-98, Thr-101, and Glu-106. Mg(2+) is bound by residues Asn-195 and Asp-209. Substrate contacts are provided by residues Asn-260 and 317–319; that span reads GIL.

It belongs to the succinate/malate CoA ligase beta subunit family. In terms of assembly, heterotetramer of two alpha and two beta subunits. It depends on Mg(2+) as a cofactor.

The enzyme catalyses succinate + ATP + CoA = succinyl-CoA + ADP + phosphate. The catalysed reaction is GTP + succinate + CoA = succinyl-CoA + GDP + phosphate. It participates in carbohydrate metabolism; tricarboxylic acid cycle; succinate from succinyl-CoA (ligase route): step 1/1. Its function is as follows. Succinyl-CoA synthetase functions in the citric acid cycle (TCA), coupling the hydrolysis of succinyl-CoA to the synthesis of either ATP or GTP and thus represents the only step of substrate-level phosphorylation in the TCA. The beta subunit provides nucleotide specificity of the enzyme and binds the substrate succinate, while the binding sites for coenzyme A and phosphate are found in the alpha subunit. In Hydrogenobaculum sp. (strain Y04AAS1), this protein is Succinate--CoA ligase [ADP-forming] subunit beta.